Consider the following 192-residue polypeptide: Outer-membrane lipoprotein LolB (192 aa).

A signal peptide spans 1-17 (MTYRTLCILAFTALISA). A lipid anchor (N-palmitoyl cysteine) is attached at Cys-18. The S-diacylglycerol cysteine moiety is linked to residue Cys-18.

This sequence belongs to the LolB family. In terms of assembly, monomer.

It is found in the cell outer membrane. Functionally, plays a critical role in the incorporation of lipoproteins in the outer membrane after they are released by the LolA protein. The chain is Outer-membrane lipoprotein LolB from Marinomonas sp. (strain MWYL1).